The following is a 449-amino-acid chain: 3-phosphoshikimate 1-carboxyvinyltransferase (449 aa).

The interval 1-26 (MNHHLPSRPARSRQSQGLKGNLRVPG) is disordered. 3-phosphoshikimate contacts are provided by Lys-28, Ser-29, and Arg-33. Phosphoenolpyruvate is bound at residue Lys-28. Phosphoenolpyruvate contacts are provided by Gly-100 and Arg-128. 3-phosphoshikimate is bound by residues Ser-174, Gln-176, Asp-327, and Lys-354. Residue Gln-176 coordinates phosphoenolpyruvate. Asp-327 (proton acceptor) is an active-site residue. Phosphoenolpyruvate-binding residues include Arg-358 and Arg-403.

This sequence belongs to the EPSP synthase family. As to quaternary structure, monomer.

It localises to the cytoplasm. It catalyses the reaction 3-phosphoshikimate + phosphoenolpyruvate = 5-O-(1-carboxyvinyl)-3-phosphoshikimate + phosphate. It participates in metabolic intermediate biosynthesis; chorismate biosynthesis; chorismate from D-erythrose 4-phosphate and phosphoenolpyruvate: step 6/7. Its function is as follows. Catalyzes the transfer of the enolpyruvyl moiety of phosphoenolpyruvate (PEP) to the 5-hydroxyl of shikimate-3-phosphate (S3P) to produce enolpyruvyl shikimate-3-phosphate and inorganic phosphate. In Chelativorans sp. (strain BNC1), this protein is 3-phosphoshikimate 1-carboxyvinyltransferase.